Reading from the N-terminus, the 670-residue chain is Lebercilin-like protein (670 aa).

The tract at residues 24-44 (RRSAECKRSPGTGDFSRNSNA) is disordered. Coiled coils occupy residues 148 to 259 (LHKI…EREE) and 305 to 336 (AAQTATKTLQVEVKHLQQKLKEKDRELEIKNI). The disordered stretch occupies residues 351–402 (YPKVSSTKSVQADRKSLPFTSMRHQGTQKSDVAPLTTKGKKATGNMDRKEKS). The segment covering 368 to 380 (PFTSMRHQGTQKS) has biased composition (polar residues). A coiled-coil region spans residues 420–440 (EDSKTKYEDLSREEKHLEVQV). 3 disordered regions span residues 495 to 520 (RSMQRNGMDDTPDKCTAPYTKGPLRQ), 533 to 594 (LHHG…FRDK), and 606 to 647 (GYVL…AFGD). The segment covering 546-558 (AGNTKYSHSTSKH) has biased composition (polar residues). Basic and acidic residues-rich tracts occupy residues 560–572 (SNREEMELEHSDS), 585–594 (KAKDTTFRDK), and 621–632 (GSEEPLQSKESH). The segment covering 637–647 (SQASASNAFGD) has biased composition (polar residues).

It belongs to the LCA5 family.

This is Lebercilin-like protein from Papio anubis (Olive baboon).